A 213-amino-acid polypeptide reads, in one-letter code: Putative manganese efflux pump MntP (213 aa).

Transmembrane regions (helical) follow at residues 3–23, 36–56, 67–87, 130–150, 152–172, and 187–207; these read ILSIVLTGFGLAMDAFAVSVA, ALKVALFFGGFQALMPLIGWG, AFDHWIAFILLSFIGGKMIFE, LAIATSIDALAVGVSFAFLGI, IVQTIIIIGIITFVLCFLGVI, and IVGGVILILIGINILLEHTGI.

This sequence belongs to the MntP (TC 9.B.29) family.

It is found in the cell membrane. Probably functions as a manganese efflux pump. The polypeptide is Putative manganese efflux pump MntP (Clostridium perfringens (strain 13 / Type A)).